The sequence spans 79 residues: Dolichyl-diphosphooligosaccharide--protein glycosyltransferase subunit TMEM258 (79 aa).

The next 2 helical transmembrane spans lie at 17–37 (VFPHLTVVLLAIGMFFTAWFF) and 55–75 (LISLVASLFMGFGVLFLLLWV).

Belongs to the OST5 family. In terms of assembly, component of the oligosaccharyltransferase (OST) complex.

Its subcellular location is the membrane. It is found in the endoplasmic reticulum. It localises to the cytoplasm. The protein operates within protein modification; protein glycosylation. In terms of biological role, subunit of the oligosaccharyl transferase (OST) complex that catalyzes the initial transfer of a defined glycan (Glc(3)Man(9)GlcNAc(2) in eukaryotes) from the lipid carrier dolichol-pyrophosphate to an asparagine residue within an Asn-X-Ser/Thr consensus motif in nascent polypeptide chains, the first step in protein N-glycosylation. N-glycosylation occurs cotranslationally and the complex associates with the Sec61 complex at the channel-forming translocon complex that mediates protein translocation across the endoplasmic reticulum (ER). All subunits are required for a maximal enzyme activity. This Xenopus laevis (African clawed frog) protein is Dolichyl-diphosphooligosaccharide--protein glycosyltransferase subunit TMEM258.